The primary structure comprises 388 residues: Putative nickel insertion protein (388 aa).

Belongs to the LarC family.

The protein is Putative nickel insertion protein of Geobacter sulfurreducens (strain ATCC 51573 / DSM 12127 / PCA).